A 250-amino-acid polypeptide reads, in one-letter code: 26 kDa periplasmic immunogenic protein (250 aa).

The N-terminal stretch at 1-28 (MNTRASNFLAASFSTIMLVGAFSLPAFA) is a signal peptide.

It is found in the periplasm. The protein is 26 kDa periplasmic immunogenic protein (bp26) of Brucella abortus (strain S19).